Consider the following 806-residue polypeptide: Mitogen-activated protein kinase 7 (806 aa).

The interval methionine 1–alanine 23 is disordered. N-acetylalanine is present on alanine 2. The required for cytoplasmic targeting stretch occupies residues alanine 2–threonine 77. Positions tyrosine 55–leucine 347 constitute a Protein kinase domain. ATP-binding positions include isoleucine 61–valine 69 and lysine 84. The interval glycine 78–leucine 139 is required for binding to MAP2K5. Residues methionine 140–glutamine 406 form a necessary for oligomerization region. Aspartate 182 (proton acceptor) is an active-site residue. The TXY signature appears at threonine 219–tyrosine 221. The may not be required for kinase activity; required to stimulate MEF2C activity stretch occupies residues proline 407–proline 806. Disordered stretches follow at residues alanine 424–threonine 475 and arginine 488–serine 727. The segment covering serine 433–glycine 443 has biased composition (pro residues). Basic and acidic residues-rich tracts occupy residues proline 502–glutamate 519, arginine 527–glycine 544, and aspartate 563–threonine 573. Positions arginine 505–glutamate 539 match the Nuclear localization signal motif. Pro residues-rich tracts occupy residues proline 578–lysine 592 and valine 627–alanine 643. A compositionally biased stretch (polar residues) spans threonine 647–valine 660. Positions proline 678–threonine 689 are enriched in pro residues. Over residues serine 693–serine 710 the composition is skewed to polar residues. The residue at position 710 (serine 710) is a Phosphoserine. Phosphothreonine is present on threonine 723.

Belongs to the protein kinase superfamily. CMGC Ser/Thr protein kinase family. MAP kinase subfamily. As to quaternary structure, interacts with MAP2K5. Forms oligomers. Interacts with MEF2A, MEF2C and MEF2D; the interaction phosphorylates the MEF2s and enhances transcriptional activity of MEF2A, MEF2C but not MEF2D. Interacts with SGK1. Interacts with PML. Interacts (via N-terminal half) with HSP90AB1-CDC37 chaperone complex in resting cells; the interaction is MAP2K5-independent and prevents MAPK7 from ubiquitination and proteasomal degradation. Interacts with STUB1/CHIP; the interaction is enhanced in the presence of IGF1 or MAP2K5 and promotes STUB1/CHIP E3 ligase activity. The cofactor is Mg(2+). Dually phosphorylated on Thr-219 and Tyr-221, which activates the enzyme.

The protein resides in the cytoplasm. The protein localises to the nucleus. Its subcellular location is the PML body. The catalysed reaction is L-seryl-[protein] + ATP = O-phospho-L-seryl-[protein] + ADP + H(+). It carries out the reaction L-threonyl-[protein] + ATP = O-phospho-L-threonyl-[protein] + ADP + H(+). Its activity is regulated as follows. Activated by tyrosine and threonine phosphorylation. Activated in response to hyperosmolarity, hydrogen peroxide, and epidermal growth factor (EGF). Plays a role in various cellular processes such as proliferation, differentiation and cell survival. The upstream activator of MAPK7 is the MAPK kinase MAP2K5. Upon activation, it translocates to the nucleus and phosphorylates various downstream targets including MEF2C. EGF activates MAPK7 through a Ras-independent and MAP2K5-dependent pathway. As part of the MAPK/ERK signaling pathway, acts as a negative regulator of apoptosis in cardiomyocytes via interaction with STUB1/CHIP and promotion of STUB1-mediated ubiquitination and degradation of ICER-type isoforms of CREM. May have a role in muscle cell differentiation. May be important for endothelial function and maintenance of blood vessel integrity. MAP2K5 and MAPK7 interact specifically with one another and not with MEK1/ERK1 or MEK2/ERK2 pathways. Phosphorylates SGK1 at Ser-78 and this is required for growth factor-induced cell cycle progression. Involved in the regulation of p53/TP53 by disrupting the PML-MDM2 interaction. This chain is Mitogen-activated protein kinase 7 (Mapk7), found in Rattus norvegicus (Rat).